The primary structure comprises 112 residues: Cortistatin (112 aa).

The N-terminal stretch at 1-27 (MGGCSTRGKRPSALSLLLLLLLSGIAA) is a signal peptide. Positions 28–81 (SALPLESGPTGQDSVQDATGGRRTGLLTFLAWWHEWASQDSSSTAFEGGTPELS) are excised as a propeptide. The segment at 66 to 101 (QDSSSTAFEGGTPELSKRQERPPLQQPPHRDKKPCK) is disordered. The cysteines at positions 100 and 111 are disulfide-linked.

Belongs to the somatostatin family. As to expression, interneurons in the cerebral cortex and hippocampus.

It is found in the secreted. Functionally, neuropeptide with neuronal depressant and sleep-modulating properties. The sequence is that of Cortistatin (Cort) from Rattus norvegicus (Rat).